A 451-amino-acid polypeptide reads, in one-letter code: Velvet complex subunit 2 (451 aa).

3 disordered regions span residues 1–95 (MNTT…PRSI), 205–312 (PGQS…QTNP), and 426–451 (PIRKDGKDGPGKGGKDGSRGDDDDDY). 3 stretches are compositionally biased toward polar residues: residues 18–28 (TMPSLHDTTYR), 40–62 (MPQTMASQHSTISAYEQYNNSLP), and 205–217 (PGQSQREPTSPTY). Residues 92–428 (PRSITVDGRK…ATQGIKIPIR (337 aa)) form the Velvet domain. Over residues 267–283 (PQQSNYYYPQPSQSIPS) the composition is skewed to low complexity. Basic and acidic residues predominate over residues 427–445 (IRKDGKDGPGKGGKDGSRG).

Belongs to the velvet family. VelB subfamily. In terms of assembly, component of the heterotrimeric velvet complex composed of LAE1, VEL1 and VEL2; VEL1 acting as a bridging protein between LAE1 and VEL2. Forms a heterodimeric complex with VOS1; the formation of the VEL2-VOS1 complex is light-dependent.

It is found in the nucleus. It localises to the cytoplasm. Component of the velvet transcription factor complex that controls sexual/asexual developmental ratio in response to light, promoting sexual development in the darkness while stimulating asexual sporulation under illumination. The velvet complex acts as a global regulator for secondary metabolite gene expression. Component of the VEL2-VOS1 heterodimeric complex that plays a dual role in activating genes associated with spore maturation and repressing certain development-associated genes. The VEL2-VOS1 complex binds DNA through the DNA-binding domain of VOS1 that recognizes an 11-nucleotide consensus sequence 5'-CTGGCCGCGGC-3' consisting of two motifs in the promoters of key developmental regulatory genes. Controls the expression of the oxalic acid and melanin gene clusters. Involved in the resistance to oxidative stress. Required for full virulence. This chain is Velvet complex subunit 2, found in Botryotinia fuckeliana (strain B05.10) (Noble rot fungus).